The following is a 360-amino-acid chain: MSQGHGKYDFYIGLGLAMSSSIFIGGSFILKKKGLLRLARKGSTRAGQGGHAYLKEWLWWAGLLSMGAGEVANFAAYAFAPATLVTPLGALSVLVSAILSSYFLNERLNLHGKIGCLLSILGSTVMVIHAPKEEEIETLNEMSHKLGDPGFVVFATLVVIVSLILIFVVGPRHGQTNILVYITICSVIGAVSVSCAKGLGIAIKELFAGKPVLQHPLTWILLLSLIVCVSTQINYLNRALDIFNTSIVTPIYYVFFTTSVITCSAILFKEWQDMPVDDVIGTLSGFFTIIVGIFLLHAFKDVSFSLSSLPVSFRKDEKAVNGSLSSMYEVLNNNEESLTCGIEQHTAENISRRNGNLTAF.

Residues 1–9 are Extracellular-facing; that stretch reads MSQGHGKYD. A helical membrane pass occupies residues 10–30; the sequence is FYIGLGLAMSSSIFIGGSFIL. At 31–56 the chain is on the cytoplasmic side; sequence KKKGLLRLARKGSTRAGQGGHAYLKE. Residues 57–77 traverse the membrane as a helical segment; that stretch reads WLWWAGLLSMGAGEVANFAAY. Residue A78 is a topological domain, extracellular. The helical transmembrane segment at 79–99 threads the bilayer; that stretch reads FAPATLVTPLGALSVLVSAIL. Over 100-107 the chain is Cytoplasmic; the sequence is SSYFLNER. Residues 108–128 form a helical membrane-spanning segment; it reads LNLHGKIGCLLSILGSTVMVI. Topologically, residues 129 to 149 are extracellular; it reads HAPKEEEIETLNEMSHKLGDP. A helical membrane pass occupies residues 150-170; the sequence is GFVVFATLVVIVSLILIFVVG. Topologically, residues 171–175 are cytoplasmic; it reads PRHGQ. Residues 176-196 form a helical membrane-spanning segment; it reads TNILVYITICSVIGAVSVSCA. The Extracellular portion of the chain corresponds to 197–215; the sequence is KGLGIAIKELFAGKPVLQH. A helical membrane pass occupies residues 216–236; sequence PLTWILLLSLIVCVSTQINYL. Topologically, residues 237–246 are cytoplasmic; the sequence is NRALDIFNTS. A helical transmembrane segment spans residues 247-267; that stretch reads IVTPIYYVFFTTSVITCSAIL. Residues 268–278 lie on the Extracellular side of the membrane; sequence FKEWQDMPVDD. Residues 279–299 form a helical membrane-spanning segment; that stretch reads VIGTLSGFFTIIVGIFLLHAF. The Cytoplasmic portion of the chain corresponds to 300 to 360; that stretch reads KDVSFSLSSL…SRRNGNLTAF (61 aa).

The protein belongs to the NIPA family.

The protein resides in the cell membrane. It localises to the early endosome. It carries out the reaction Mg(2+)(in) = Mg(2+)(out). In terms of biological role, acts as a selective Mg(2+) transporter. The sequence is that of Magnesium transporter NIPA2 (NIPA2) from Bos taurus (Bovine).